A 265-amino-acid polypeptide reads, in one-letter code: 3-methyl-2-oxobutanoate hydroxymethyltransferase (265 aa).

Positions 41 and 80 each coordinate Mg(2+). 3-methyl-2-oxobutanoate contacts are provided by residues 41 to 42 (DS), Asp-80, and Lys-110. Glu-112 lines the Mg(2+) pocket. The Proton acceptor role is filled by Glu-179.

The protein belongs to the PanB family. In terms of assembly, homodecamer; pentamer of dimers. The cofactor is Mg(2+).

The protein localises to the cytoplasm. It carries out the reaction 3-methyl-2-oxobutanoate + (6R)-5,10-methylene-5,6,7,8-tetrahydrofolate + H2O = 2-dehydropantoate + (6S)-5,6,7,8-tetrahydrofolate. It participates in cofactor biosynthesis; (R)-pantothenate biosynthesis; (R)-pantoate from 3-methyl-2-oxobutanoate: step 1/2. Catalyzes the reversible reaction in which hydroxymethyl group from 5,10-methylenetetrahydrofolate is transferred onto alpha-ketoisovalerate to form ketopantoate. The protein is 3-methyl-2-oxobutanoate hydroxymethyltransferase of Pseudothermotoga lettingae (strain ATCC BAA-301 / DSM 14385 / NBRC 107922 / TMO) (Thermotoga lettingae).